Here is a 144-residue protein sequence, read N- to C-terminus: Large ribosomal subunit protein uL13 (144 aa).

It belongs to the universal ribosomal protein uL13 family. In terms of assembly, part of the 50S ribosomal subunit.

Functionally, this protein is one of the early assembly proteins of the 50S ribosomal subunit, although it is not seen to bind rRNA by itself. It is important during the early stages of 50S assembly. The sequence is that of Large ribosomal subunit protein uL13 from Clostridium novyi (strain NT).